The chain runs to 317 residues: Transaldolase (317 aa).

The active-site Schiff-base intermediate with substrate is the lysine 132.

This sequence belongs to the transaldolase family. Type 1 subfamily. As to quaternary structure, homodimer.

Its subcellular location is the cytoplasm. The catalysed reaction is D-sedoheptulose 7-phosphate + D-glyceraldehyde 3-phosphate = D-erythrose 4-phosphate + beta-D-fructose 6-phosphate. The protein operates within carbohydrate degradation; pentose phosphate pathway; D-glyceraldehyde 3-phosphate and beta-D-fructose 6-phosphate from D-ribose 5-phosphate and D-xylulose 5-phosphate (non-oxidative stage): step 2/3. In terms of biological role, transaldolase is important for the balance of metabolites in the pentose-phosphate pathway. The sequence is that of Transaldolase from Histophilus somni (strain 129Pt) (Haemophilus somnus).